We begin with the raw amino-acid sequence, 1273 residues long: Homeobox protein cut-like ceh-44 (1273 aa).

Coiled-coil stretches lie at residues 101–407 (LLKG…DGFK) and 440–468 (RQKN…KFED). 3 consecutive DNA-binding regions (CUT) follow at residues 591-681 (NVQA…LSPR), 832-919 (QAQY…KQPK), and 978-1065 (IDES…KEES). A disordered region spans residues 1069-1100 (VKAKIESVPAPREAPRPVKRKHSSDTDDYDLN). Positions 1103–1162 (KPIQRTVITDYQKDTLRFVFVNEQHPSNELCEQISLKLDMSLRTVQNWFHNHRTRSKARE) form a DNA-binding region, homeobox.

It belongs to the CUT homeobox family.

The protein localises to the nucleus. In terms of biological role, probable DNA-binding regulatory protein involved in cell-fate specification. This is Homeobox protein cut-like ceh-44 from Caenorhabditis elegans.